The following is a 307-amino-acid chain: Ras-related protein RabR (307 aa).

Residues M1–S10 are compositionally biased toward polar residues. The tract at residues M1–N45 is disordered. The span at T11–N45 shows a compositional bias: low complexity. G61–G68 contributes to the GTP binding site. An Effector region motif is present at residues E83–R92. N122 to H126 contributes to the GTP binding site. A compositionally biased stretch (low complexity) spans N175 to S185. The disordered stretch occupies residues N175–P223. A compositionally biased stretch (polar residues) spans T186–Q202. N230–D233 serves as a coordination point for GTP. C304 is modified (cysteine methyl ester). C304 carries the S-geranylgeranyl cysteine lipid modification. The propeptide at N305–M307 is removed in mature form.

This sequence belongs to the small GTPase superfamily. Rab family.

It localises to the cell membrane. This chain is Ras-related protein RabR (rabR), found in Dictyostelium discoideum (Social amoeba).